Reading from the N-terminus, the 272-residue chain is HMP-PP phosphatase (272 aa).

The Nucleophile role is filled by Asp-8. Residues Asp-8, Asp-10, and Asp-212 each coordinate Mg(2+).

Belongs to the HAD-like hydrolase superfamily. Cof family. Requires Mg(2+) as cofactor.

It carries out the reaction 4-amino-2-methyl-5-(diphosphooxymethyl)pyrimidine + H2O = 4-amino-2-methyl-5-(phosphooxymethyl)pyrimidine + phosphate + H(+). Its function is as follows. Catalyzes the hydrolysis of 4-amino-2-methyl-5-hydroxymethylpyrimidine pyrophosphate (HMP-PP) to 4-amino-2-methyl-5-hydroxymethylpyrimidine phosphate (HMP-P). The chain is HMP-PP phosphatase from Escherichia coli O8 (strain IAI1).